The chain runs to 224 residues: Germin-like protein 8-12 (224 aa).

Positions 1 to 23 are cleaved as a signal peptide; sequence MASSSLFLLGALLVLASWQAIVA. An intrachain disulfide couples C33 to C48. Positions 60 to 213 constitute a Cupin type-1 domain; it reads FNAAKFDMPR…AFQVEKKLID (154 aa). N-linked (GlcNAc...) asparagine glycosylation occurs at N78. The Mn(2+) site is built by H111, H113, E118, and H158.

It belongs to the germin family. Oligomer (believed to be a pentamer but probably hexamer).

Its subcellular location is the secreted. The protein localises to the extracellular space. The protein resides in the apoplast. Its function is as follows. Plays a role in broad-spectrum disease resistance. Probably has no oxalate oxidase activity even if the active site is conserved. The polypeptide is Germin-like protein 8-12 (Oryza sativa subsp. japonica (Rice)).